A 473-amino-acid polypeptide reads, in one-letter code: Ornithine decarboxylase (473 aa).

Lys106 bears the N6-(pyridoxal phosphate)lysine mark. Residues Ser240, Gly277, and 313-316 (EPGR) each bind pyridoxal 5'-phosphate. 367–368 (FD) contacts substrate. The active-site Proton donor; shared with dimeric partner is Cys417. Asp418 provides a ligand contact to substrate. Tyr447 contributes to the pyridoxal 5'-phosphate binding site.

This sequence belongs to the Orn/Lys/Arg decarboxylase class-II family. Homodimer. Only the dimer is catalytically active, as the active sites are constructed of residues from both monomers. Requires pyridoxal 5'-phosphate as cofactor.

The protein resides in the cytoplasm. It catalyses the reaction L-ornithine + H(+) = putrescine + CO2. It participates in amine and polyamine biosynthesis; putrescine biosynthesis via L-ornithine pathway; putrescine from L-ornithine: step 1/1. Its activity is regulated as follows. Inhibited by antizyme (AZ) OAZ1 in response to polyamine levels. AZ inhibits the assembly of the functional homodimer by binding to ODC monomers and targeting them for ubiquitin-independent proteolytic destruction by the 26S proteasome. Its function is as follows. Catalyzes the first and rate-limiting step of polyamine biosynthesis that converts ornithine into putrescine, which is the precursor for the polyamines, spermidine and spermine. Polyamines are essential for cell proliferation and are implicated in cellular processes, ranging from DNA replication to apoptosis. This chain is Ornithine decarboxylase (SPE1), found in Candida albicans (strain SC5314 / ATCC MYA-2876) (Yeast).